The primary structure comprises 209 residues: Small ribosomal subunit protein uS4 (209 aa).

The region spanning 98 to 166 is the S4 RNA-binding domain; sequence RRLDNVVYRL…IKQAIELNKG (69 aa).

The protein belongs to the universal ribosomal protein uS4 family. Part of the 30S ribosomal subunit. Contacts protein S5. The interaction surface between S4 and S5 is involved in control of translational fidelity.

Its function is as follows. One of the primary rRNA binding proteins, it binds directly to 16S rRNA where it nucleates assembly of the body of the 30S subunit. With S5 and S12 plays an important role in translational accuracy. The chain is Small ribosomal subunit protein uS4 from Fervidobacterium nodosum (strain ATCC 35602 / DSM 5306 / Rt17-B1).